A 372-amino-acid chain; its full sequence is L-selectin (372 aa).

The signal sequence occupies residues 1–28; sequence MVFPWRCQSAQRGSWSFLKLWIRTLLCC. The propeptide occupies 29–38; the sequence is DLLPHHGTHC. The Extracellular segment spans residues 39-332; it reads WTYHYSERSM…FSKIKEGDYN (294 aa). In terms of domain architecture, C-type lectin spans 55–155; that stretch reads KFCKHNYTDL…ACHKRKAALC (101 aa). Intrachain disulfides connect Cys-57/Cys-155, Cys-128/Cys-147, Cys-128/Cys-160, Cys-160/Cys-171, Cys-165/Cys-180, Cys-182/Cys-191, Cys-197/Cys-241, Cys-227/Cys-254, Cys-259/Cys-303, and Cys-289/Cys-316. Asn-60 and Asn-104 each carry an N-linked (GlcNAc...) asparagine glycan. Positions 118, 120, 126, 143, and 144 each coordinate Ca(2+). One can recognise an EGF-like domain in the interval 156–192; sequence YTASCQPESCNRHGECVETINNNTCICDPGYYGPQCQ. Asn-177 carries an N-linked (GlcNAc...) asparagine glycan. 2 consecutive Sushi domains span residues 195-256 and 257-318; these read IQCE…ICQV and IQCM…ICQK. Asn-226, Asn-246, and Asn-278 each carry an N-linked (GlcNAc...) asparagine glycan. The helical transmembrane segment at 333 to 355 threads the bilayer; it reads PLFIPVAVMVTAFSGLAFIIWLA. Residues 356-372 are Cytoplasmic-facing; that stretch reads RRLKKGKKSQERMDDPY.

Belongs to the selectin/LECAM family. In terms of assembly, interaction with SELPLG/PSGL1 and PODXL2 is required for promoting recruitment and rolling of leukocytes. This interaction is dependent on the sialyl Lewis X glycan modification of SELPLG and PODXL2, and tyrosine sulfation modifications of SELPLG. Sulfation on 'Tyr-51' of SELPLG is important for L-selectin binding. N-glycosylated. As to expression, expressed in peripheral blood mononuclear cells (PBMC), spleen and thymus.

The protein localises to the cell membrane. Functionally, calcium-dependent lectin that mediates cell adhesion by binding to glycoproteins on neighboring cells. Mediates the adherence of lymphocytes to endothelial cells of high endothelial venules in peripheral lymph nodes. Promotes initial tethering and rolling of leukocytes in endothelia. This Rattus norvegicus (Rat) protein is L-selectin (Sell).